The chain runs to 578 residues: Proline--tRNA ligase (578 aa).

This sequence belongs to the class-II aminoacyl-tRNA synthetase family. ProS type 1 subfamily. In terms of assembly, homodimer.

It localises to the cytoplasm. It catalyses the reaction tRNA(Pro) + L-proline + ATP = L-prolyl-tRNA(Pro) + AMP + diphosphate. Functionally, catalyzes the attachment of proline to tRNA(Pro) in a two-step reaction: proline is first activated by ATP to form Pro-AMP and then transferred to the acceptor end of tRNA(Pro). As ProRS can inadvertently accommodate and process non-cognate amino acids such as alanine and cysteine, to avoid such errors it has two additional distinct editing activities against alanine. One activity is designated as 'pretransfer' editing and involves the tRNA(Pro)-independent hydrolysis of activated Ala-AMP. The other activity is designated 'posttransfer' editing and involves deacylation of mischarged Ala-tRNA(Pro). The misacylated Cys-tRNA(Pro) is not edited by ProRS. The chain is Proline--tRNA ligase from Burkholderia pseudomallei (strain 668).